A 226-amino-acid polypeptide reads, in one-letter code: Fibrillarin-like rRNA/tRNA 2'-O-methyltransferase (226 aa).

S-adenosyl-L-methionine contacts are provided by residues 85 to 86 (TT), 104 to 105 (EF), 129 to 130 (DA), and 149 to 152 (DVAQ).

Belongs to the methyltransferase superfamily. Fibrillarin family. Interacts with nop5. Component of box C/D small ribonucleoprotein (sRNP) particles that contain rpl7ae, FlpA and nop5, plus a guide RNA.

Its function is as follows. Involved in pre-rRNA and tRNA processing. Utilizes the methyl donor S-adenosyl-L-methionine to catalyze the site-specific 2'-hydroxyl methylation of ribose moieties in rRNA and tRNA. Site specificity is provided by a guide RNA that base pairs with the substrate. Methylation occurs at a characteristic distance from the sequence involved in base pairing with the guide RNA. The chain is Fibrillarin-like rRNA/tRNA 2'-O-methyltransferase from Thermococcus onnurineus (strain NA1).